Reading from the N-terminus, the 142-residue chain is Coactosin-like protein (142 aa).

Alanine 2 carries the N-acetylalanine modification. Residues 2 to 130 (ATKIDKEACR…EEDFIRSELK (129 aa)) form the ADF-H domain. Position 23 is a phosphoserine (serine 23). The interval 66–75 (TGDAMSKRSK) is flexible and important for F-actin binding. Lysine 102 is subject to N6-acetyllysine. Position 141 is a phosphoserine (serine 141).

This sequence belongs to the actin-binding proteins ADF family. Coactosin subfamily. In terms of assembly, interacts with 5-lipoxygenase (ALOX5/5LO) in a calcium-independent manner. Binds to F-actin with a stoichiometry of 1:2.

The protein localises to the cytoplasm. Its subcellular location is the cytoskeleton. The protein resides in the nucleus. In terms of biological role, binds to F-actin in a calcium-independent manner. Has no direct effect on actin depolymerization. Acts as a chaperone for ALOX5 (5LO), influencing both its stability and activity in leukotrienes synthesis. This is Coactosin-like protein from Rattus norvegicus (Rat).